A 385-amino-acid polypeptide reads, in one-letter code: Probable thioesterase PNKD (385 aa).

Over residues 31–42 (NKASQNRSRALQ) the composition is skewed to polar residues. Residues 31 to 57 (NKASQNRSRALQSHSSPECKEEPEPLS) form a disordered region. 7 residues coordinate Zn(2+): His-172, His-174, Asp-176, His-177, His-229, Asp-253, and His-291.

Belongs to the metallo-beta-lactamase superfamily. Glyoxalase II family. It depends on Zn(2+) as a cofactor. Post-translationally, undergoes cleavage at the N-terminus.

It localises to the cell membrane. The protein localises to the mitochondrion. It catalyses the reaction a thioester + H2O = a thiol + a carboxylate + H(+). Its function is as follows. Probable thioesterase that may play a role in cellular detoxification processes; it likely acts on a yet-unknown alpha-hydroxythioester substrate. In vitro, it is able to catalyze the hydrolysis of S-D-lactoyl-glutathione to form glutathione and D-lactic acid at very low rate, though this reaction is not physiologically relevant in vivo. The protein is Probable thioesterase PNKD (PNKD) of Bos taurus (Bovine).